The primary structure comprises 135 residues: Ribosome-binding factor A (135 aa).

The protein belongs to the RbfA family. In terms of assembly, monomer. Binds 30S ribosomal subunits, but not 50S ribosomal subunits or 70S ribosomes.

It is found in the cytoplasm. One of several proteins that assist in the late maturation steps of the functional core of the 30S ribosomal subunit. Associates with free 30S ribosomal subunits (but not with 30S subunits that are part of 70S ribosomes or polysomes). Required for efficient processing of 16S rRNA. May interact with the 5'-terminal helix region of 16S rRNA. The chain is Ribosome-binding factor A from Aliivibrio salmonicida (strain LFI1238) (Vibrio salmonicida (strain LFI1238)).